The sequence spans 499 residues: Ribulose bisphosphate carboxylase large chain (499 aa).

2 residues coordinate substrate: asparagine 139 and threonine 189. The active-site Proton acceptor is lysine 191. Lysine 193 provides a ligand contact to substrate. The Mg(2+) site is built by lysine 217, aspartate 219, and glutamate 220. Lysine 217 is modified (N6-carboxylysine). Histidine 309 serves as the catalytic Proton acceptor. Substrate-binding residues include arginine 310, histidine 342, and serine 394.

The protein belongs to the RuBisCO large chain family. Type I subfamily. As to quaternary structure, heterohexadecamer of 8 large chains and 8 small chains. It depends on Mg(2+) as a cofactor.

The catalysed reaction is 2 (2R)-3-phosphoglycerate + 2 H(+) = D-ribulose 1,5-bisphosphate + CO2 + H2O. It carries out the reaction D-ribulose 1,5-bisphosphate + O2 = 2-phosphoglycolate + (2R)-3-phosphoglycerate + 2 H(+). Functionally, ruBisCO catalyzes two reactions: the carboxylation of D-ribulose 1,5-bisphosphate, the primary event in carbon dioxide fixation, as well as the oxidative fragmentation of the pentose substrate. Both reactions occur simultaneously and in competition at the same active site. The chain is Ribulose bisphosphate carboxylase large chain from Paraburkholderia xenovorans (strain LB400).